Consider the following 357-residue polypeptide: MSIVIQNVSKSFGSFQALADINLSIETGELVALLGPSGSGKTSLLRIIAGLEAADQGDIYFHKDKVTQTHAASRQVGFVFQHYALFPHMTVADNISYGLRVKPRKERPSKKEIAEKVRELLALVKLEGMDDRYPAQLSGGQRQRIALARALAVEPKVLLLDEPFGALDAKVRKDLRKWLRKLHNEFQVTSVFVTHDQEEALDVSDRVVVMNQGKIEQVGSPDEVYEQPKSPFVYDFLGNVNVFTGRVKQGFVQLDKHQLKTPTISKDIHDQEAVVYTRPHHMEISRKKQKDAIPAVIEHIHMVGPIAFLELNWKDDEEVLQVELAKDRFHELDLKKGETVFVVPKNLTLFFPEEFTI.

One can recognise an ABC transporter domain in the interval 3-237 (IVIQNVSKSF…PKSPFVYDFL (235 aa)). 35–42 (GPSGSGKT) is a binding site for ATP.

This sequence belongs to the ABC transporter superfamily. Sulfate/tungstate importer (TC 3.A.1.6) family. In terms of assembly, the complex is composed of two ATP-binding proteins (CysA), two transmembrane proteins (CysT and CysW) and a solute-binding protein (CysP).

The protein resides in the cell membrane. It carries out the reaction sulfate(out) + ATP + H2O = sulfate(in) + ADP + phosphate + H(+). It catalyses the reaction thiosulfate(out) + ATP + H2O = thiosulfate(in) + ADP + phosphate + H(+). Its function is as follows. Part of the ABC transporter complex CysAWTP involved in sulfate/thiosulfate import. Responsible for energy coupling to the transport system. The sequence is that of Sulfate/thiosulfate import ATP-binding protein CysA from Halalkalibacterium halodurans (strain ATCC BAA-125 / DSM 18197 / FERM 7344 / JCM 9153 / C-125) (Bacillus halodurans).